The primary structure comprises 244 residues: Phosphatidylinositol phosphate synthase (244 aa).

3 consecutive transmembrane segments (helical) span residues 24–42, 49–66, and 72–91; these read YARA…FLIR, TVTL…LVFY, and FWGT…DGNM. A CDP-1,2-diacyl-sn-glycerol is bound at residue 48-51; it reads DTVT. Residues aspartate 85 and aspartate 88 each coordinate Mg(2+). Positions 89, 93, and 99 each coordinate a CDP-1,2-diacyl-sn-glycerol. Mg(2+) is bound by residues aspartate 106 and aspartate 110. Aspartate 110 serves as the catalytic Proton acceptor. A run of 3 helical transmembrane segments spans residues 117-137, 174-190, and 196-214; these read IFGG…LCAV, LVIS…HKFG, and VLLP…VTLI.

Belongs to the CDP-alcohol phosphatidyltransferase class-I family. In terms of assembly, homodimer. Requires Mg(2+) as cofactor.

It is found in the cell membrane. The enzyme catalyses a CDP-1,2-diacyl-sn-glycerol + 1D-myo-inositol 3-phosphate = a 1,2-diacyl-sn-glycero-3-phospho-(1D-myo-inositol-3-phosphate) + CMP + H(+). It catalyses the reaction 1,2-di-(9Z-octadecenoyl)-sn-glycero-3-cytidine-5'-diphosphate + 1D-myo-inositol 3-phosphate = 1,2-di-(9Z-octadecenoyl)-sn-glycero-3-phospho-(1D-myo-inositol-3-phosphate) + CMP + H(+). It functions in the pathway phospholipid metabolism; phosphatidylinositol phosphate biosynthesis. Its function is as follows. Catalyzes the conjugation of the 1'-hydroxyl group of D-myo-inositol-3-phosphate (also named L-myo-inositol-1-phosphate) with a lipid tail of cytidine diphosphate diacylglycerol (CDP-DAG), forming phosphatidylinositol phosphate (PIP) and CMP. PIP is a precursor of phosphatidylinositol (PI) which is an essential lipid required for cell wall formation. This is Phosphatidylinositol phosphate synthase from Streptomyces avermitilis (strain ATCC 31267 / DSM 46492 / JCM 5070 / NBRC 14893 / NCIMB 12804 / NRRL 8165 / MA-4680).